The sequence spans 748 residues: Rho GTPase-activating protein 24 (748 aa).

The disordered stretch occupies residues 1-20; sequence MEENNDSTENPQQGQGRQNA. Polar residues predominate over residues 7 to 18; sequence STENPQQGQGRQ. A PH domain is found at 19 to 125; the sequence is NAIKCGWLRK…WVKSIRRVIW (107 aa). Positions 135–329 constitute a Rho-GAP domain; sequence QKLEDTVRYE…VMISKHDCLF (195 aa). 2 disordered regions span residues 354–476 and 582–641; these read TMGQ…GTHS and DFFG…SSNH. Polar residues-rich tracts occupy residues 356-374 and 382-405; these read GQLQNKENNNTKDSPSRQC and PQRSSMNNGSPTALSGSKTNSPKN. 8 positions are modified to phosphoserine: Ser-369, Ser-391, Ser-396, Ser-398, Ser-402, Ser-413, Ser-415, and Ser-437. The segment covering 432 to 476 has biased composition (polar residues); the sequence is IVTNGSFSSSNAEGLEKTQTTPNGSLQARRSSSLKVSGTKMGTHS. Thr-452 carries the post-translational modification Phosphothreonine. Basic and acidic residues predominate over residues 600–615; it reads DLSHPRDYESKSDHRS. Residues 617–641 show a composition bias toward low complexity; it reads GGRSSRATSSSDNSETFVGNSSSNH. Positions 649 to 729 form a coiled coil; that stretch reads SSLKQEMTKQ…KEMEQFFSTF (81 aa).

As to quaternary structure, interacts with FLNA. Post-translationally, phosphorylated by ROCK, leading to activate the RacGAP activity. In terms of tissue distribution, isoform 1 is widely expressed with a higher level in kidney. Isoform 2 is mainly expressed in endothelial cells.

Its subcellular location is the cytoplasm. The protein resides in the cytoskeleton. It is found in the cell junction. It localises to the adherens junction. The protein localises to the focal adhesion. Its subcellular location is the cell projection. Functionally, rho GTPase-activating protein involved in cell polarity, cell morphology and cytoskeletal organization. Acts as a GTPase activator for the Rac-type GTPase by converting it to an inactive GDP-bound state. Controls actin remodeling by inactivating Rac downstream of Rho leading to suppress leading edge protrusion and promotes cell retraction to achieve cellular polarity. Able to suppress RAC1 and CDC42 activity in vitro. Overexpression induces cell rounding with partial or complete disruption of actin stress fibers and formation of membrane ruffles, lamellipodia, and filopodia. Isoform 2 is a vascular cell-specific GAP involved in modulation of angiogenesis. This chain is Rho GTPase-activating protein 24 (ARHGAP24), found in Homo sapiens (Human).